A 193-amino-acid chain; its full sequence is Intracellular heme transport protein HutX (193 aa).

Tyr-116 is a heme binding site.

Homodimer. Interacts with HutZ.

The protein localises to the cytoplasm. In terms of biological role, binds heme. Heme is transferred to the heme-degrading enzyme HutZ via a specific protein-protein interaction. In Vibrio cholerae serotype O1 (strain ATCC 39315 / El Tor Inaba N16961), this protein is Intracellular heme transport protein HutX.